Consider the following 142-residue polypeptide: Large ribosomal subunit protein uL13 (142 aa).

It belongs to the universal ribosomal protein uL13 family. In terms of assembly, part of the 50S ribosomal subunit.

In terms of biological role, this protein is one of the early assembly proteins of the 50S ribosomal subunit, although it is not seen to bind rRNA by itself. It is important during the early stages of 50S assembly. In Citrobacter koseri (strain ATCC BAA-895 / CDC 4225-83 / SGSC4696), this protein is Large ribosomal subunit protein uL13.